We begin with the raw amino-acid sequence, 178 residues long: Bifunctional protein PyrR (178 aa).

The PRPP-binding motif lies at 99 to 111; sequence VIIVDDVLYTCRT.

The protein belongs to the purine/pyrimidine phosphoribosyltransferase family. PyrR subfamily. Homodimer and homohexamer; in equilibrium.

The catalysed reaction is UMP + diphosphate = 5-phospho-alpha-D-ribose 1-diphosphate + uracil. In terms of biological role, regulates transcriptional attenuation of the pyrimidine nucleotide (pyr) operon by binding in a uridine-dependent manner to specific sites on pyr mRNA. This disrupts an antiterminator hairpin in the RNA and favors formation of a downstream transcription terminator, leading to a reduced expression of downstream genes. Functionally, also displays a weak uracil phosphoribosyltransferase activity which is not physiologically significant. This chain is Bifunctional protein PyrR, found in Clostridium perfringens (strain ATCC 13124 / DSM 756 / JCM 1290 / NCIMB 6125 / NCTC 8237 / Type A).